We begin with the raw amino-acid sequence, 78 residues long: Metallothionein-like protein type 2 (78 aa).

This sequence belongs to the metallothionein superfamily. Type 15 family.

Functionally, metallothioneins have a high content of cysteine residues that bind various heavy metals. This Nicotiana glutinosa (Tobacco) protein is Metallothionein-like protein type 2.